The primary structure comprises 632 residues: Chaperone protein HtpG (632 aa).

Positions 1 to 339 (MTQQTMSFQA…SSDLPLNVSR (339 aa)) are a; substrate-binding. The b stretch occupies residues 340-559 (EILQESRDVK…DNDMSGYLQR (220 aa)). The tract at residues 560–632 (MLKAAGQNAP…TNALLLSRAA (73 aa)) is c.

Belongs to the heat shock protein 90 family. As to quaternary structure, homodimer.

It localises to the cytoplasm. Its function is as follows. Molecular chaperone. Has ATPase activity. This Burkholderia thailandensis (strain ATCC 700388 / DSM 13276 / CCUG 48851 / CIP 106301 / E264) protein is Chaperone protein HtpG.